Here is a 177-residue protein sequence, read N- to C-terminus: Probetacellulin (177 aa).

The N-terminal stretch at 1 to 31 (MDPTAPGSSVSSLPLLLVLALGLAILHCVVA) is a signal peptide. Residues 32 to 118 (DGNTTRTPET…LFYLQQDRGQ (87 aa)) are Extracellular-facing. N-linked (GlcNAc...) asparagine glycosylation is found at N34, N42, and N52. An EGF-like domain is found at 65–105 (HFSRCPKQYKHYCIHGRCRFVVDEQTPSCICEKGYFGARCE). Cystine bridges form between C69/C82, C77/C93, and C95/C104. The propeptide at 112 to 177 (LQQDRGQILV…SEDIQETNIA (66 aa)) is removed in mature form. A helical transmembrane segment spans residues 119-139 (ILVVCLIVVMVVFIILVIGVC). The Cytoplasmic portion of the chain corresponds to 140-177 (TCCHPLRKHRKKKKEEKMETLDKDKTPISEDIQETNIA). Positions 153–177 (KEEKMETLDKDKTPISEDIQETNIA) are disordered. The segment covering 154 to 167 (EEKMETLDKDKTPI) has biased composition (basic and acidic residues).

As to quaternary structure, monomer. Interacts with EGFR and ERBB4. As to expression, found in several mouse tissues including kidney, uterus and liver, as well as in beta tumor cell line and MCF-7 cells. It is not detected in the brain.

The protein localises to the secreted. It is found in the extracellular space. Its subcellular location is the cell membrane. Its function is as follows. Growth factor that binds to EGFR, ERBB4 and other EGF receptor family members. Potent mitogen for retinal pigment epithelial cells and vascular smooth muscle cells. The chain is Probetacellulin (Btc) from Mus musculus (Mouse).